The sequence spans 300 residues: NADH-cytochrome b5 reductase 1 (300 aa).

The helical transmembrane segment at 8–28 threads the bilayer; it reads PLVVFATVATIIISFVTLYFF. Over residues 34 to 45 the composition is skewed to low complexity; sequence SSTTSSSSSSSS. Residues 34–54 are disordered; the sequence is SSTTSSSSSSSSKSKKGSPAL. The FAD-binding FR-type domain occupies 57–160; that stretch reads DKFQKFPLIS…RGPKGFFTYT (104 aa). Residues 140–155 and 166–198 each bind FAD; these read AEKQ…GPKG and SLGL…KVHL.

It belongs to the flavoprotein pyridine nucleotide cytochrome reductase family. Monomer. Component of the 2-(3-amino-3-carboxypropyl)histidine synthase complex composed of DPH1, DPH2, DPH3 and a NADH-dependent reductase, predominantly CBR1. Requires FAD as cofactor.

It localises to the mitochondrion outer membrane. It catalyses the reaction 2 Fe(III)-[cytochrome b5] + NADH = 2 Fe(II)-[cytochrome b5] + NAD(+) + H(+). The enzyme catalyses 2 Fe(3+)-[Dph3] + NADH = 2 Fe(2+)-[Dph3] + NAD(+) + H(+). Its pathway is protein modification; peptidyl-diphthamide biosynthesis. NADH-dependent reductase for DPH3 and cytochrome b5. Required for the first step of diphthamide biosynthesis, a post-translational modification of histidine which occurs in elongation factor 2. DPH1 and DPH2 transfer a 3-amino-3-carboxypropyl (ACP) group from S-adenosyl-L-methionine (SAM) to a histidine residue, the reaction is assisted by a reduction system comprising DPH3 and a NADH-dependent reductase, predominantly CBR1. By reducing DPH3, also involved in the formation of the tRNA wobble base modification mcm5s 2U (5-methoxycarbonylmethyl-2-thiouridine), mediated by the elongator complex. The cytochrome b5/NADH cytochrome b5 reductase electron transfer system supports the catalytic activity of several sterol biosynthetic enzymes. This is NADH-cytochrome b5 reductase 1 (CBR1) from Lodderomyces elongisporus (strain ATCC 11503 / CBS 2605 / JCM 1781 / NBRC 1676 / NRRL YB-4239) (Yeast).